The primary structure comprises 254 residues: Polysaccharide deacetylase domain-containing protein ECU11_0510 (254 aa).

One can recognise a NodB homology domain in the interval 26–210 (GMIAINFVDG…IGKDKGYRFV (185 aa)).

This is Polysaccharide deacetylase domain-containing protein ECU11_0510 from Encephalitozoon cuniculi (strain GB-M1) (Microsporidian parasite).